The sequence spans 369 residues: Outer membrane protein P2 (369 aa).

A signal peptide spans 1 to 20 (MKKTLAALIVGAFAASAANA).

It belongs to the Gram-negative porin family. In terms of assembly, homotrimer.

The protein localises to the cell outer membrane. Forms pores that allow passive diffusion of small molecules across the outer membrane. This Haemophilus influenzae protein is Outer membrane protein P2 (ompP2).